The sequence spans 1584 residues: Dicer-like protein 1 (1584 aa).

Residues 31-60 are disordered; the sequence is EDVVSDNDDRGNASDVESEDGVKRWTVNPE. The 182-residue stretch at 129–310 folds into the Helicase ATP-binding domain; sequence LFERAKQQNT…RAAAELEALL (182 aa). 142 to 149 serves as a coordination point for ATP; sequence LDTGSGKT. The short motif at 255–258 is the DEAH box element; it reads DEAH. The 174-residue stretch at 448–621 folds into the Helicase C-terminal domain; that stretch reads KVIMLVRILR…EALPEDRKLT (174 aa). Residues 654–744 form the Dicer dsRNA-binding fold domain; sequence SLVCLANFTA…QSVFTKQLPE (91 aa). Positions 894–1028 constitute a PAZ domain; the sequence is KALAYVSENE…LILEPMRISP (135 aa). RNase III domains lie at 1052–1207 and 1258–1424; these read VALD…LTGQ and AKKF…VDSE. Mg(2+) is bound by residues Glu1298, Asp1410, and Glu1413. The 88-residue stretch at 1458-1545 folds into the DRBM domain; the sequence is TFVANMMAHK…AKKAIKLLEG (88 aa). 4 residues coordinate Zn(2+): Cys1470, His1516, Cys1557, and Cys1559.

Belongs to the helicase family. Dicer subfamily. It depends on Mg(2+) as a cofactor. Mn(2+) is required as a cofactor.

In terms of biological role, dicer-like endonuclease involved in cleaving double-stranded RNA in the RNA interference (RNAi) pathway. Produces 21 to 25 bp dsRNAs (siRNAs) which target the selective destruction of homologous RNAs leading to sequence-specific suppression of gene expression, called post-transcriptional gene silencing (PTGS). Part of a broad host defense response against viral infection and transposons. Controls the expression of the non-LTR retrotransposon Tad in the African strain, Adiomopoume. The protein is Dicer-like protein 1 (dcl-1) of Neurospora crassa (strain ATCC 24698 / 74-OR23-1A / CBS 708.71 / DSM 1257 / FGSC 987).